Consider the following 299-residue polypeptide: MANFPASLLILNGKSADNQPLREAITLLRDEGIQIHVRVTWEKGDAQRYVDEARRLGVETVIAGGGDGTINEVSTALIQIRDGVAPALGLLPLGTANDFATSAGIPEALDKALKLAIAGNAMEIDMARVNDKTCFINMATGGFGTRITTETPEKLKAALGGVSYLIHGLMRMDTLTPDRCEIRGENFHWQGDTLVIGIGNGRQAGGGQQLCPTALVNDGLLQLRIFTGEELLPALFSTLTQSDDNPNIIDDASAWFDIHAPHEITFNLDGEPLSGQEFHIEVLPGALRCRLPPDCPLLR.

Positions alanine 2 to threonine 133 constitute a DAGKc domain. Residues threonine 40, glycine 66–glutamate 72, and threonine 95 each bind ATP. Mg(2+)-binding residues include leucine 215, aspartate 218, and leucine 220. The Proton acceptor role is filled by glutamate 271.

This sequence belongs to the diacylglycerol/lipid kinase family. YegS lipid kinase subfamily. Mg(2+) is required as a cofactor. The cofactor is Ca(2+).

The protein resides in the cytoplasm. Its function is as follows. Probably phosphorylates lipids; the in vivo substrate is unknown. In Salmonella gallinarum (strain 287/91 / NCTC 13346), this protein is Probable lipid kinase YegS.